Consider the following 122-residue polypeptide: Small ribosomal subunit protein uS13 (122 aa).

Residues 97-122 (PVRGQRTHTNARTRKGPAKAIAGKKK) are disordered.

It belongs to the universal ribosomal protein uS13 family. Part of the 30S ribosomal subunit. Forms a loose heterodimer with protein S19. Forms two bridges to the 50S subunit in the 70S ribosome.

Its function is as follows. Located at the top of the head of the 30S subunit, it contacts several helices of the 16S rRNA. In the 70S ribosome it contacts the 23S rRNA (bridge B1a) and protein L5 of the 50S subunit (bridge B1b), connecting the 2 subunits; these bridges are implicated in subunit movement. Contacts the tRNAs in the A and P-sites. This chain is Small ribosomal subunit protein uS13, found in Bartonella tribocorum (strain CIP 105476 / IBS 506).